The primary structure comprises 436 residues: 3-ketoacyl-CoA thiolase (436 aa).

Catalysis depends on C99, which acts as the Acyl-thioester intermediate. Catalysis depends on proton acceptor residues H392 and C422.

This sequence belongs to the thiolase-like superfamily. Thiolase family. Heterotetramer of two alpha chains (FadJ) and two beta chains (FadI).

It is found in the cytoplasm. It catalyses the reaction an acyl-CoA + acetyl-CoA = a 3-oxoacyl-CoA + CoA. The protein operates within lipid metabolism; fatty acid beta-oxidation. Its function is as follows. Catalyzes the final step of fatty acid oxidation in which acetyl-CoA is released and the CoA ester of a fatty acid two carbons shorter is formed. This is 3-ketoacyl-CoA thiolase from Escherichia coli O1:K1 / APEC.